Here is a 492-residue protein sequence, read N- to C-terminus: uncharacterized protein (492 aa).

Belongs to the FGGY kinase family.

This is an uncharacterized protein from Escherichia coli (strain K12).